The following is a 362-amino-acid chain: Somatostatin receptor type 5 (362 aa).

Polar residues predominate over residues 1–10 (MEPLSLTSTP). The tract at residues 1–24 (MEPLSLTSTPSWNASAASSSSHNW) is disordered. The Extracellular portion of the chain corresponds to 1–35 (MEPLSLTSTPSWNASAASSSSHNWSLVDPVSPMGA). Residues 11–24 (SWNASAASSSSHNW) show a composition bias toward low complexity. 2 N-linked (GlcNAc...) asparagine glycosylation sites follow: Asn13 and Asn23. Residues 36–63 (RAVLVPVLYLLVCTVGLGGNTLVIYVVL) traverse the membrane as a helical segment. Topologically, residues 64 to 73 (RYAKMKTVTN) are cytoplasmic. The helical transmembrane segment at 74–99 (VYILNLAVADVLFMLGLPFLATQNAV) threads the bilayer. At 100 to 110 (SYWPFGSFLCR) the chain is on the extracellular side. Cysteines 109 and 184 form a disulfide. The chain crosses the membrane as a helical span at residues 111–132 (LVMTLDGINQFTSIFCLMVMSV). At 133 to 154 (DRYLAVVHPLRSARWRRPRVAK) the chain is on the cytoplasmic side. Residues 155–175 (LASAAVWVFSLLMSLPLLVFA) traverse the membrane as a helical segment. Topologically, residues 176–195 (DVQEGWGTCNLSWPEPVGLW) are extracellular. Asn185 carries an N-linked (GlcNAc...) asparagine glycan. A helical membrane pass occupies residues 196–220 (GAAFITYTSVLGFFGPLLVICLCYL). Over 221–246 (LIVVKVKAAGMRVGSSRRRRSERKVT) the chain is Cytoplasmic. The helical transmembrane segment at 247–272 (RMVVVVVLVFVGCWLPFFIVNIVNLA) threads the bilayer. The Extracellular segment spans residues 273–282 (FTLPEEPTSA). A helical membrane pass occupies residues 283 to 307 (GLYFFVVVLSYANSCANPLLYGFLS). Residues 308-362 (DNFRQSFRKALCLRRGYGVEDADAIEPRPDKSGRPQTTLPTRSCEANGLMQTSRL) lie on the Cytoplasmic side of the membrane. Cys319 is lipidated: S-palmitoyl cysteine; by ZDHHC5. Residues 330-362 (DAIEPRPDKSGRPQTTLPTRSCEANGLMQTSRL) form a disordered region.

Belongs to the G-protein coupled receptor 1 family. As to quaternary structure, heterodimer with SSTR2. Heterodimerization with SSTR2 increases cell growth inhibition activity of SSTR2. In terms of processing, palmitoylated at Cys-319 by ZDHHC5, but not ZDHHC8. Palmitoylation creates an additional intracellular loop which is thought to be important for efficient coupling to G-proteins and may target the protein to lipid rafts. Expressed in adult brain but not in liver, heart, spleen, or kidney.

It is found in the cell membrane. Functionally, receptor for somatostatin-28. The activity of this receptor is mediated by G proteins which inhibit adenylyl cyclase. Increases cell growth inhibition activity of SSTR2 following heterodimerization. This is Somatostatin receptor type 5 (Sstr5) from Mus musculus (Mouse).